The primary structure comprises 445 residues: Exodeoxyribonuclease 7 large subunit (445 aa).

This sequence belongs to the XseA family. In terms of assembly, heterooligomer composed of large and small subunits.

The protein resides in the cytoplasm. The enzyme catalyses Exonucleolytic cleavage in either 5'- to 3'- or 3'- to 5'-direction to yield nucleoside 5'-phosphates.. Its function is as follows. Bidirectionally degrades single-stranded DNA into large acid-insoluble oligonucleotides, which are then degraded further into small acid-soluble oligonucleotides. The protein is Exodeoxyribonuclease 7 large subunit of Pasteurella multocida (strain Pm70).